The sequence spans 236 residues: Purine nucleoside phosphorylase DeoD-type (236 aa).

A purine D-ribonucleoside is bound at residue histidine 5. Residues glycine 21, arginine 25, arginine 44, and 88-91 each bind phosphate; that span reads RVGT. A purine D-ribonucleoside is bound by residues 180-182 and 204-205; these read EME and SD. Aspartate 205 functions as the Proton donor in the catalytic mechanism.

The protein belongs to the PNP/UDP phosphorylase family. As to quaternary structure, homohexamer; trimer of homodimers.

The catalysed reaction is a purine D-ribonucleoside + phosphate = a purine nucleobase + alpha-D-ribose 1-phosphate. It carries out the reaction a purine 2'-deoxy-D-ribonucleoside + phosphate = a purine nucleobase + 2-deoxy-alpha-D-ribose 1-phosphate. Functionally, catalyzes the reversible phosphorolytic breakdown of the N-glycosidic bond in the beta-(deoxy)ribonucleoside molecules, with the formation of the corresponding free purine bases and pentose-1-phosphate. The chain is Purine nucleoside phosphorylase DeoD-type from Shewanella frigidimarina (strain NCIMB 400).